The following is a 515-amino-acid chain: Cytoplasmic tRNA 2-thiolation protein 2 (515 aa).

Disordered stretches follow at residues 1–24 (MCQVGEDYGEPAPEEPPPAPRPSR) and 188–217 (LGAGGGPGPTQGEEQPPQPPLDPQNLARPP). An N-acetylcysteine modification is found at Cys-2. Ser-415, Ser-419, Ser-435, and Ser-508 each carry phosphoserine.

It belongs to the CTU2/NCS2 family. Component of a complex at least composed of URM1, CTU2/NCS2 and CTU1/ATPBD3.

It is found in the cytoplasm. Its pathway is tRNA modification; 5-methoxycarbonylmethyl-2-thiouridine-tRNA biosynthesis. Its function is as follows. Plays a central role in 2-thiolation of mcm(5)S(2)U at tRNA wobble positions of tRNA(Lys), tRNA(Glu) and tRNA(Gln). May act by forming a heterodimer with CTU1/ATPBD3 that ligates sulfur from thiocarboxylated URM1 onto the uridine of tRNAs at wobble position. The protein is Cytoplasmic tRNA 2-thiolation protein 2 of Homo sapiens (Human).